Here is a 635-residue protein sequence, read N- to C-terminus: 1-deoxy-D-xylulose-5-phosphate synthase (635 aa).

Residues His79 and 120-122 (GHS) each bind thiamine diphosphate. Residue Asp151 participates in Mg(2+) binding. Thiamine diphosphate contacts are provided by residues 152–153 (GA), Asn182, Tyr290, and Glu372. Mg(2+) is bound at residue Asn182.

It belongs to the transketolase family. DXPS subfamily. In terms of assembly, homodimer. Mg(2+) is required as a cofactor. The cofactor is thiamine diphosphate.

The catalysed reaction is D-glyceraldehyde 3-phosphate + pyruvate + H(+) = 1-deoxy-D-xylulose 5-phosphate + CO2. Its pathway is metabolic intermediate biosynthesis; 1-deoxy-D-xylulose 5-phosphate biosynthesis; 1-deoxy-D-xylulose 5-phosphate from D-glyceraldehyde 3-phosphate and pyruvate: step 1/1. Catalyzes the acyloin condensation reaction between C atoms 2 and 3 of pyruvate and glyceraldehyde 3-phosphate to yield 1-deoxy-D-xylulose-5-phosphate (DXP). The protein is 1-deoxy-D-xylulose-5-phosphate synthase of Stenotrophomonas maltophilia (strain K279a).